The primary structure comprises 498 residues: Glycerol kinase (498 aa).

Thr11 is a binding site for ADP. ATP-binding residues include Thr11, Ser12, and Ser13. Position 11 (Thr11) interacts with sn-glycerol 3-phosphate. Arg15 serves as a coordination point for ADP. Sn-glycerol 3-phosphate is bound by residues Arg81, Glu82, Tyr133, and Asp242. Glycerol-binding residues include Arg81, Glu82, Tyr133, Asp242, and Gln243. ADP is bound by residues Thr264 and Gly307. Thr264, Gly307, Gln311, and Gly408 together coordinate ATP. Residues Gly408 and Asn412 each contribute to the ADP site.

It belongs to the FGGY kinase family.

It carries out the reaction glycerol + ATP = sn-glycerol 3-phosphate + ADP + H(+). It functions in the pathway polyol metabolism; glycerol degradation via glycerol kinase pathway; sn-glycerol 3-phosphate from glycerol: step 1/1. Its activity is regulated as follows. Inhibited by fructose 1,6-bisphosphate (FBP). Key enzyme in the regulation of glycerol uptake and metabolism. Catalyzes the phosphorylation of glycerol to yield sn-glycerol 3-phosphate. The sequence is that of Glycerol kinase from Ralstonia pickettii (strain 12J).